A 677-amino-acid chain; its full sequence is Pannexin-2 (677 aa).

Residues 11-47 (MATALLAGEKLRELILPGAQDDKAGALAALLLQLKLE) lie on the Cytoplasmic side of the membrane. The helical transmembrane segment at 48–70 (LPFDRVVTIGTVLVPILLVTLVF) threads the bilayer. At 71–123 (TKNFAEEPIYCYTPHNFTRDQALYARGYCWTELRDALPGVDASLWPSLFEHKF) the chain is on the extracellular side. A glycan (N-linked (GlcNAc...) asparagine) is linked at asparagine 86. The helical transmembrane segment at 124–146 (LPYALLAFAAIMYVPALGWEFLA) threads the bilayer. The Cytoplasmic portion of the chain corresponds to 147–226 (STRLTSELNF…RGRSNFLAKL (80 aa)). The chain crosses the membrane as a helical span at residues 227-249 (YLARHVLILLLSAVPISYLCTYY). Residues 250–292 (ATQKQNEFTCALGASPDGAAGAGPAVRVSCKLPSVQLQRIIAG) are Extracellular-facing. Residues 293–315 (VDIVLLCVMNLIILVNLIHLFIF) traverse the membrane as a helical segment. Over 316–643 (RKSNFIFDKL…AREEEDGGPR (328 aa)) the chain is Cytoplasmic. Disordered stretches follow at residues 393–423 (ATPTVRDSGVQTVDPSANPAEPDGAAEPPVV) and 454–510 (NSKA…KKHA). Pro residues predominate over residues 492–504 (GPGPAPAPAPPPA). A Phosphoserine modification is found at serine 593.

Belongs to the pannexin family. In terms of assembly, homoheptameric. S-palmitoylated in neural stem and progenitor cells. In terms of processing, cleaved by CASP3 and CASP7 during apoptosis. Cleavage has no effect on it function.

The protein localises to the cell membrane. Its subcellular location is the golgi apparatus membrane. The protein resides in the endoplasmic reticulum membrane. The enzyme catalyses ATP(in) = ATP(out). It catalyses the reaction chloride(in) = chloride(out). The catalysed reaction is iodide(out) = iodide(in). It carries out the reaction Na(+)(in) = Na(+)(out). The enzyme catalyses D-gluconate(in) = D-gluconate(out). In terms of biological role, ion channel with a slight anion preference. Also able to release ATP. Plays a role in regulating neurogenesis and apoptosis in keratinocytes. The sequence is that of Pannexin-2 from Homo sapiens (Human).